Here is a 448-residue protein sequence, read N- to C-terminus: Protein chibby homolog 2 (448 aa).

Residues serine 41, serine 86, serine 89, serine 97, serine 124, serine 144, serine 148, and serine 150 each carry the phosphoserine modification. Positions 163-198 (AKEFVLQEENKSLREENKALREENRMLRKENKILQV) form a coiled coil. The segment at 206 to 226 (SLGREESRPPSPLPQKDSASL) is disordered. Phosphoserine is present on residues serine 212 and serine 225. Positions 242–267 (KEDSTLQLLREENRALQQLLEQKQAY) form a coiled coil. A disordered region spans residues 270-321 (QTEDAAAPAEESKPAPSPHEEPCSPGLLQDQGSGLSSHFEEPRGPPAPQEDS). Residues 279-291 (EESKPAPSPHEEP) are compositionally biased toward basic and acidic residues. Phosphoserine is present on residues serine 335 and serine 338. Residues 356 to 414 (LQLLREMRQALQALLKENRLLQEENRTLQVLRAEHRGFQEENKALWENNKLKLQQKLVI) are a coiled coil.

The protein belongs to the chibby family. SPERT subfamily. As to quaternary structure, homodimer. Binds to NEK1.

This Macaca fascicularis (Crab-eating macaque) protein is Protein chibby homolog 2 (CBY2).